The following is a 315-amino-acid chain: MPELERAPKLDQALAEVAAEMAERTDRGDVATYIPQLGKVDPRKFGIAAVTNDGRVLVAGDADQAFSIQSISKVFTLTLALGNVGDALWQRVGREPSGNPFNSIVQLEHENGIPRNPFINAGAIVISDILLAGHQPREAIGEILRFIQFLADDDTIIIDREVAASERATGYRNFALANYMKSFGNLHHAPELALGVYFHHCAIAMSCRQLAMAGRFLANGGKNPATGHSVVSAERARRIGAMMLTCGHYDGSGDFAFRVGIPGKSGVGGGILGIVPGVASLAVWSPGLNANGNSKLGSIALEKLARMMNWSIFAP.

7 residues coordinate substrate: S70, N120, E166, N173, Y197, Y249, and V267.

It belongs to the glutaminase family. As to quaternary structure, homotetramer.

The catalysed reaction is L-glutamine + H2O = L-glutamate + NH4(+). The sequence is that of Glutaminase from Mesorhizobium japonicum (strain LMG 29417 / CECT 9101 / MAFF 303099) (Mesorhizobium loti (strain MAFF 303099)).